The chain runs to 91 residues: Putative membrane protein insertion efficiency factor (91 aa).

Positions 72–91 (SGGNDPVPEKLTHINHQHEK) are disordered. Over residues 78–91 (VPEKLTHINHQHEK) the composition is skewed to basic and acidic residues.

It belongs to the UPF0161 family.

Its subcellular location is the cell inner membrane. Its function is as follows. Could be involved in insertion of integral membrane proteins into the membrane. This is Putative membrane protein insertion efficiency factor from Pseudoalteromonas translucida (strain TAC 125).